The primary structure comprises 105 residues: MTKSLEEFKKLVDAEEYFKFFELDYDAKIVNVNRLHILKKFSQLISEIDTNYPDISAEEKLNQYSLALQSAYQVFLGSSPQEQKLFKVFKDKPKNVITLTELSSD.

This sequence belongs to the NifW family. In terms of assembly, homotrimer; associates with NifD.

Functionally, may protect the nitrogenase Fe-Mo protein from oxidative damage. This is Nitrogenase-stabilizing/protective protein NifW 1 from Trichormus variabilis (strain ATCC 29413 / PCC 7937) (Anabaena variabilis).